Here is a 555-residue protein sequence, read N- to C-terminus: MASQASQVLASPHPAISSENRPKADFHPGIWGDMFIICPDTDIDAATELQYEELKAQVRKMIMEPVDDSNQKLPFIDAVQRLGVSYHFEKEIEDELENIYRDTNNNDADTDLYTTALRFRLLREHGFDISCDAFNKFKDEAGNFKASLTSDVQGLLELYEASYMRVHGEDILDEAISFTTAQLTLALPTLHHPLSEQVGHALKQSIRRGLPRVEARNFISIYQDLESHNKSLLQFAKIDFNLLQLLHRKELSEICRWWKDLDFTRKLPFARDRVVEGYFWIMGVYFEPQYSLGRKMLTKVIAMASIVDDTYDSYATYDELIPYTNAIERWDIKCMNQLPNYMKISYKALLNVYEEMEQLLANQGRQYRVEYAKKAMIRLVQAYLLEAKWTHQNYKPTFEEFRDNALPTSGYAMLAITAFVGMGEVITPETFKWAASDPKIIKASTIICRFMDDIAEHKFNHRREDDCSAIECYMKQYGVTAQEAYNEFNKHIESSWKDVNEEFLKPTEMPTPVLCRSLNLARVMDVLYREGDGYTHVGKAAKGGITSLLIDPIQI.

Residues 1-22 form a disordered region; that stretch reads MASQASQVLASPHPAISSENRP. Mg(2+) is bound by residues Asp-308, Asp-312, Asp-452, and Glu-456. Positions 308-312 match the DDXXD motif motif; it reads DDTYD.

This sequence belongs to the terpene synthase family. It depends on Mg(2+) as a cofactor.

It carries out the reaction (2E,6E)-farnesyl diphosphate = (1S,8aR)-delta-cadinene + diphosphate. Its pathway is secondary metabolite biosynthesis; terpenoid biosynthesis. Responsible for the cyclization of trans,trans-farnesyl diphosphate (FPP) to (+)-delta cadinene. The protein is (+)-delta-cadinene synthase isozyme A (CAD1-A) of Gossypium arboreum (Tree cotton).